The primary structure comprises 337 residues: MVDYVTDIVVIGAGPIGIFTVFQSGMLSMQCCVIDTLNEIGGQCVALYPEKPIYDIPAYPIITAKELINNLVEQSKPFDPQYLLGQMAEKIEEYMDYLLVKTNYGTVIQCKAIIIAAGSGAFGPNRLPVDNIIDFENKSVFYSVKQISDFYDKSVMIAGGGDSAADWAVELSKVTKQLYMVHRRKNFRCSPNTSLKLDDLFQRGKINLVVPYQIKQLCGKDGKLDYVVVKNITTSEELTLQVDYLLPFFGTSANLGPILNWGITISGYQIVIDPATCRTNRNKIYAVGDISTYPGKIKLILTGFSESAMACHDIYHIVYPNSPLNFQYSTSKGIPKV.

7 residues coordinate FAD: Asp35, Gln43, Tyr48, Ala88, Phe122, Asp289, and Thr330.

The protein belongs to the ferredoxin--NADP reductase type 2 family. In terms of assembly, homodimer. FAD serves as cofactor.

The enzyme catalyses 2 reduced [2Fe-2S]-[ferredoxin] + NADP(+) + H(+) = 2 oxidized [2Fe-2S]-[ferredoxin] + NADPH. This is Ferredoxin--NADP reductase from Ehrlichia ruminantium (strain Gardel).